Reading from the N-terminus, the 395-residue chain is Flavohemoprotein (395 aa).

Positions 1–136 (MLDQQTIATI…LANVFIQRES (136 aa)) constitute a Globin domain. Position 85 (H85) interacts with heme b. Active-site charge relay system residues include Y95 and E135. The interval 147 to 395 (GGWHGIRPFR…YECFGPHKVI (249 aa)) is reductase. An FAD-binding FR-type domain is found at 150–255 (HGIRPFRIVA…AAPHGDFYLE (106 aa)). Residues Y188 and 204 to 207 (RQYS) each bind FAD. 268-273 (GVGQTP) lines the NADP(+) pocket. FAD is bound at residue 388–391 (CFGP).

This sequence belongs to the globin family. Two-domain flavohemoproteins subfamily. In the C-terminal section; belongs to the flavoprotein pyridine nucleotide cytochrome reductase family. Heme b is required as a cofactor. FAD serves as cofactor.

Its subcellular location is the cytoplasm. The enzyme catalyses 2 nitric oxide + NADPH + 2 O2 = 2 nitrate + NADP(+) + H(+). It catalyses the reaction 2 nitric oxide + NADH + 2 O2 = 2 nitrate + NAD(+) + H(+). Is involved in NO detoxification in an aerobic process, termed nitric oxide dioxygenase (NOD) reaction that utilizes O(2) and NAD(P)H to convert NO to nitrate, which protects the bacterium from various noxious nitrogen compounds. Therefore, plays a central role in the inducible response to nitrosative stress. This Dickeya dadantii (strain 3937) (Erwinia chrysanthemi (strain 3937)) protein is Flavohemoprotein (hmp).